We begin with the raw amino-acid sequence, 556 residues long: MKSDIQIAQEAKMEPIKNVAEKLGLCEDDIEYYGKYKCKISLDVYDKVKNNNNGKLVLVTAINPTPAGEGKSTVTVGLGQALNRIGKKAVIALREPSLGPVFGIKGGAAGGGYAQVVPMEDINLHFTGDMHAITSANNLLSAAIDNHIHQGNVLRIDSRRIVFKRVMDMNDRALRHIIVGMGGKVNGFVREDGFNITVASEIMAILCLASDLEDLKERMGNIVIAYNLDGNPVYAKELEIQGAMALLMKDAIKPNLVQTLENTPALIHGGPFANIAHGCNSIMATKLALKLGDVVITEAGFGADLGAEKFFDIKCRYGNLEPECVVVVATIRALKHHGGVAKTELNIPNVEALKDGIANLEKQIENIKKFKITPVVAINKFVTDSSEEVEFIKDFCDRIGVKVALCDVWAKGGEGGIDLANIVLDALENSESNFEPIYDKEKSIREKIFTIASEIYGADKVNYTPAAKKQIDELEKFKLDKLPICMAKTQYSLSDNPSLLARPTGFDITVKEVRVSNGAGFIVVQTGDIMTMPGLPKVPAANKMDVLKSGEIIGLF.

Threonine 65–serine 72 is an ATP binding site.

The protein belongs to the formate--tetrahydrofolate ligase family.

The enzyme catalyses (6S)-5,6,7,8-tetrahydrofolate + formate + ATP = (6R)-10-formyltetrahydrofolate + ADP + phosphate. The protein operates within one-carbon metabolism; tetrahydrofolate interconversion. In Clostridium beijerinckii (strain ATCC 51743 / NCIMB 8052) (Clostridium acetobutylicum), this protein is Formate--tetrahydrofolate ligase.